Consider the following 160-residue polypeptide: Large ribosomal subunit protein uL16 (160 aa).

A disordered region spans residues isoleucine 138–lysine 160. Basic and acidic residues predominate over residues lysine 149–lysine 160.

This sequence belongs to the universal ribosomal protein uL16 family. Part of the 50S ribosomal subunit.

In terms of biological role, binds 23S rRNA and is also seen to make contacts with the A and possibly P site tRNAs. The sequence is that of Large ribosomal subunit protein uL16 from Prochlorococcus marinus subsp. pastoris (strain CCMP1986 / NIES-2087 / MED4).